The primary structure comprises 290 residues: Protein MGF 110-9L (290 aa).

An N-terminal signal peptide occupies residues 1-19 (MKVIVLLLVLAVMQPVIQS). An A repeat occupies 1–160 (MKVIVLLLVL…QYSRMRMQAA (160 aa)). 2 helical membrane-spanning segments follow: residues 128–148 (VENI…IGYV) and 163–183 (LLIF…IIMN). A B repeat occupies 161 to 290 (TRLLIFLGLY…KRHVINQDDL (130 aa)).

The protein belongs to the asfivirus MGF 110 family.

It localises to the membrane. The sequence is that of Protein MGF 110-9L from Ornithodoros (relapsing fever ticks).